The chain runs to 386 residues: uncharacterized protein (386 aa).

Belongs to the mimivirus L17x/L18x family.

This is an uncharacterized protein from Acanthamoeba polyphaga mimivirus (APMV).